The primary structure comprises 160 residues: Transcription elongation factor GreA (160 aa).

Residues 1-72 (MAEKTYPMTL…QISSLETKIR (72 aa)) are a coiled coil.

The protein belongs to the GreA/GreB family.

Functionally, necessary for efficient RNA polymerase transcription elongation past template-encoded arresting sites. The arresting sites in DNA have the property of trapping a certain fraction of elongating RNA polymerases that pass through, resulting in locked ternary complexes. Cleavage of the nascent transcript by cleavage factors such as GreA or GreB allows the resumption of elongation from the new 3'terminus. GreA releases sequences of 2 to 3 nucleotides. The sequence is that of Transcription elongation factor GreA from Streptococcus pneumoniae serotype 4 (strain ATCC BAA-334 / TIGR4).